Consider the following 354-residue polypeptide: Serum paraoxonase/lactonase 3 (354 aa).

Cys42 and Cys352 are joined by a disulfide. Asn50 carries N-linked (GlcNAc...) asparagine glycosylation. Ca(2+) is bound by residues Glu53 and Asp54. His114 (proton acceptor) is an active-site residue. A Ca(2+)-binding site is contributed by Ile116. Ser165 is modified (phosphoserine). The Ca(2+) site is built by Asn167, Asp168, Asn223, Asp268, and Asn269. 2 N-linked (GlcNAc...) asparagine glycosylation sites follow: Asn269 and Asn323.

Belongs to the paraoxonase family. In terms of assembly, homodimer. Requires Ca(2+) as cofactor. Post-translationally, glycosylated. In terms of processing, the signal sequence is not cleaved.

It localises to the secreted. Its subcellular location is the extracellular space. It carries out the reaction a phenyl acetate + H2O = a phenol + acetate + H(+). The catalysed reaction is An aryl dialkyl phosphate + H2O = dialkyl phosphate + an aryl alcohol.. The enzyme catalyses an N-acyl-L-homoserine lactone + H2O = an N-acyl-L-homoserine + H(+). Functionally, has low activity towards the organophosphate paraxon and aromatic carboxylic acid esters. Rapidly hydrolyzes lactones such as statin prodrugs (e.g. lovastatin). Hydrolyzes aromatic lactones and 5- or 6-member ring lactones with aliphatic substituents but not simple lactones or those with polar substituents. This is Serum paraoxonase/lactonase 3 (Pon3) from Rattus norvegicus (Rat).